The primary structure comprises 562 residues: MTTTTTVKSDIEIAQEASMKKIQEIAADLNILEDELEPYGHYKGKLSLDIFKRLQNEKDGKVVLVTAINPTPAGEGKSTVTVGLGQAFNKIGKKTVIALREPSLGPTMGLKGGAAGGGFSQVVPMEDINLHFTGDIHAITTANNALAAFIDNHIQQGNTLGIDTRKIVWKRCVDLNDRALRNVVIGLGGPVQGVPREDGFDITVASEIMAVFCLATDIQDLKARLSRIVVAYNFANQPVTVKDLGVEGALTLLLKDALKPNLVQTLENTPAIIHGGPFANIAHGCNSVIATTMAAKLGDYVITEAGFGADLGAEKFLDIKARAAGIKPEAVVIVATIRALKMHGGVAKDQLKEENVDALAKGMENLQKHVETIQSFGVPFVIAINKFITDTDAEVAYLQEWCNERGYAVSLTEVWEKGGQGGVDLAEKVLKEIEKGENNYAPLYELELPLEEKIRTIAQKVYGAKDIEFAPKARKQLAQYEGEGWSNLPICMAKTQYSLSDDATKLGRPSDFIVTIRELKPSIGAGFIVALTGTMLTMPGLPKQPAALQMDVNEDGKAVGLF.

71–78 serves as a coordination point for ATP; it reads TPAGEGKS.

It belongs to the formate--tetrahydrofolate ligase family.

The catalysed reaction is (6S)-5,6,7,8-tetrahydrofolate + formate + ATP = (6R)-10-formyltetrahydrofolate + ADP + phosphate. The protein operates within one-carbon metabolism; tetrahydrofolate interconversion. The sequence is that of Formate--tetrahydrofolate ligase from Bacillus thuringiensis (strain Al Hakam).